The chain runs to 81 residues: Sulfur carrier protein TusA (81 aa).

Residue C19 is the Cysteine persulfide intermediate of the active site.

It belongs to the sulfur carrier protein TusA family.

It localises to the cytoplasm. Functionally, sulfur carrier protein which probably makes part of a sulfur-relay system. This is Sulfur carrier protein TusA from Shewanella putrefaciens (strain CN-32 / ATCC BAA-453).